A 398-amino-acid polypeptide reads, in one-letter code: Acetate kinase (398 aa).

Asn-10 is a Mg(2+) binding site. Lys-17 contacts ATP. Residue Arg-89 participates in substrate binding. Asp-148 acts as the Proton donor/acceptor in catalysis. Residues 208–212 (HLGNG), 283–285 (DCR), and 331–335 (GIGEN) each bind ATP. Glu-385 lines the Mg(2+) pocket.

The protein belongs to the acetokinase family. Homodimer. Mg(2+) is required as a cofactor. The cofactor is Mn(2+).

It localises to the cytoplasm. It catalyses the reaction acetate + ATP = acetyl phosphate + ADP. It functions in the pathway metabolic intermediate biosynthesis; acetyl-CoA biosynthesis; acetyl-CoA from acetate: step 1/2. Its function is as follows. Catalyzes the formation of acetyl phosphate from acetate and ATP. Can also catalyze the reverse reaction. This is Acetate kinase from Histophilus somni (strain 2336) (Haemophilus somnus).